Here is a 485-residue protein sequence, read N- to C-terminus: NADH-quinone oxidoreductase subunit N (485 aa).

14 consecutive transmembrane segments (helical) span residues 8–28, 35–55, 75–95, 105–125, 127–147, 159–179, 203–223, 235–255, 271–291, 297–317, 326–346, 374–394, 407–426, and 449–469; these read LIAL…MLCI, FVNA…LYFV, FYTG…YPWL, FYLL…ANHL, SLFI…GYAF, YMLL…LIYA, LLAG…LVPF, PAPV…GAVM, IVLG…AVSQ, LLGY…IAVQ, VGVY…VVSL, AVMT…GFFG, LWWL…YYYL, and ALTA…FFGL.

Belongs to the complex I subunit 2 family. As to quaternary structure, NDH-1 is composed of 13 different subunits. Subunits NuoA, H, J, K, L, M, N constitute the membrane sector of the complex.

It is found in the cell inner membrane. It catalyses the reaction a quinone + NADH + 5 H(+)(in) = a quinol + NAD(+) + 4 H(+)(out). In terms of biological role, NDH-1 shuttles electrons from NADH, via FMN and iron-sulfur (Fe-S) centers, to quinones in the respiratory chain. The immediate electron acceptor for the enzyme in this species is believed to be ubiquinone. Couples the redox reaction to proton translocation (for every two electrons transferred, four hydrogen ions are translocated across the cytoplasmic membrane), and thus conserves the redox energy in a proton gradient. The polypeptide is NADH-quinone oxidoreductase subunit N (Pectobacterium carotovorum subsp. carotovorum (strain PC1)).